The primary structure comprises 316 residues: GPI-specific phospholipase A2-like PGAP3 (316 aa).

An N-terminal signal peptide occupies residues 1-19 (MFLAAAAFLLSAPASASQG). The Lumenal segment spans residues 20-97 (DKEPVYRDCV…GKWPFARFLC (78 aa)). The N-linked (GlcNAc...) asparagine glycan is linked to asparagine 36. Residues 98–118 (FEEPASALASLLNGLACLLML) traverse the membrane as a helical segment. Over 119–131 (LRYRSAVPCQSPM) the chain is Cytoplasmic. The helical transmembrane segment at 132–152 (YHTITAFSLVSLNAWFWSTVF) threads the bilayer. The Lumenal portion of the chain corresponds to 153-165 (HTRDTYLTEKMDY). The helical transmembrane segment at 166 to 186 (FCASAVILYSIYLCCVRTLGL) threads the bilayer. Residues 187–194 (RRPAISSM) lie on the Cytoplasmic side of the membrane. Residues 195–215 (VGVLLILAFTSHVSYLTFVSF) traverse the membrane as a helical segment. Residues 216–220 (DYGYN) are Lumenal-facing. A helical transmembrane segment spans residues 221-241 (MAANASIGIINLLWWLCWCWL). Topologically, residues 242–254 (NRRILPYWWRCGM) are cytoplasmic. Residues 255–275 (VVLLLHGLALLELLDFPPLFW) form a helical membrane-spanning segment. Residues 276-278 (VLD) lie on the Lumenal side of the membrane. The chain crosses the membrane as a helical span at residues 279 to 299 (AHAVWHLSTVPVHFLFYSFLI). The Cytoplasmic portion of the chain corresponds to 300-316 (DDSLHLLNTEKPGVKLD).

It belongs to the PGAP3 family.

Its subcellular location is the golgi apparatus membrane. Its function is as follows. Involved in the fatty acid remodeling steps of GPI-anchor maturation where the unsaturated acyl chain at sn-2 of inositol phosphate is replaced by a saturated stearoyl chain. May catalyze the first step of the fatty acid remodeling, by removing the unsaturated acyl chain at sn-2 of inositol phosphate, generating a lyso-GPI intermediate. The fatty acid remodeling steps is critical for the integration of GPI-APs into lipid rafts. This is GPI-specific phospholipase A2-like PGAP3 from Danio rerio (Zebrafish).